The chain runs to 205 residues: Imidazole glycerol phosphate synthase subunit HisH (205 aa).

A Glutamine amidotransferase type-1 domain is found at Arg3 to Ile205. Cys80 (nucleophile) is an active-site residue. Active-site residues include His185 and Glu187.

As to quaternary structure, heterodimer of HisH and HisF.

Its subcellular location is the cytoplasm. The enzyme catalyses 5-[(5-phospho-1-deoxy-D-ribulos-1-ylimino)methylamino]-1-(5-phospho-beta-D-ribosyl)imidazole-4-carboxamide + L-glutamine = D-erythro-1-(imidazol-4-yl)glycerol 3-phosphate + 5-amino-1-(5-phospho-beta-D-ribosyl)imidazole-4-carboxamide + L-glutamate + H(+). The catalysed reaction is L-glutamine + H2O = L-glutamate + NH4(+). The protein operates within amino-acid biosynthesis; L-histidine biosynthesis; L-histidine from 5-phospho-alpha-D-ribose 1-diphosphate: step 5/9. In terms of biological role, IGPS catalyzes the conversion of PRFAR and glutamine to IGP, AICAR and glutamate. The HisH subunit catalyzes the hydrolysis of glutamine to glutamate and ammonia as part of the synthesis of IGP and AICAR. The resulting ammonia molecule is channeled to the active site of HisF. The sequence is that of Imidazole glycerol phosphate synthase subunit HisH from Acinetobacter baylyi (strain ATCC 33305 / BD413 / ADP1).